The chain runs to 258 residues: Oxidoreductase fscI (258 aa).

NADP(+) contacts are provided by leucine 34, arginine 59, aspartate 82, asparagine 109, and lysine 141. The active-site Proton donor is serine 163. Arginine 193 serves as a coordination point for NADP(+).

The protein belongs to the short-chain dehydrogenases/reductases (SDR) family.

Its pathway is secondary metabolite biosynthesis. Its function is as follows. Oxidoreductase; part of the fragmented gene cluster that mediates the biosynthesis of fusarochromene, a tryptophan-derived metabolite closely related to a group of mycotoxins including fusarochromanone. Within the pathway, fscI catalyzes the formation of the chromene ring from the prenyl moity added by the prenyltransferase fscG. The first step of the pathway is the epimerization of L-tryptophan to D-tryptophan in the presence of the NRPS-like tryptophan epimerase fscC. D-tryptophan is subsequently hydroxylated by the tryptophan 6-hydroxylase fscE to yield 6-hydroxytryptophan. The pyrrole ring undergoes cleavaged by the tryptophan 2,3-dioxygenase fscD and is finally converted to 4-hydroxykyrunenine by the hydrolase fscH. The NRPS-like oxidoreductase fscA reduces the carboxyl group to primary alcohol and the DMATS-type prenyltransferase fscG performs prenylation, followed by the formation of a chromene ring catalyzed by the oxidoreductase fscI, which leads to desacetylfusarochromene. Epoxidation by fscF and rearrangement reactions of chromene double bonds convert compound desacetylfusarochromene to fusarochromanones. Although specific acetyltransferases were not found near the fsc gene cluster, several predicted enzymes containing the N-acetyltransferase superfamily domain are present in the genome of F.equiseti. These predicted enzymes may have the potential to convert desacetylfusarochromene to fusarochromene. This Fusarium equiseti (Fusarium scirpi) protein is Oxidoreductase fscI.